We begin with the raw amino-acid sequence, 525 residues long: Sensory neuron membrane protein 1 (525 aa).

Residues 1–11 are Cytoplasmic-facing; the sequence is MLLPKELKYAA. Residues 12 to 32 traverse the membrane as a helical segment; sequence IAGGVAVFGLIFGWVLFPVIL. The Extracellular segment spans residues 33 to 456; sequence KGQLKKEMAL…LKHQLFIPKR (424 aa). Asn-67, Asn-229, and Asn-324 each carry an N-linked (GlcNAc...) asparagine glycan. 3 disulfides stabilise this stretch: Cys-268–Cys-333, Cys-297–Cys-352, and Cys-335–Cys-341. N-linked (GlcNAc...) asparagine glycosylation occurs at Asn-440. The chain crosses the membrane as a helical span at residues 457–477; sequence VVGVLRWWMVSFGSLGADIGI. Residues 478 to 525 lie on the Cytoplasmic side of the membrane; it reads VYHFRDHIMRLAVSGDTKVSKVTPEEDPEQKDISVIGPPAQEPAKINI. The interval 497-525 is disordered; sequence SKVTPEEDPEQKDISVIGPPAQEPAKINI.

This sequence belongs to the CD36 family.

The protein localises to the cell membrane. In terms of biological role, plays an olfactory role that is not restricted to pheromone sensitivity. The polypeptide is Sensory neuron membrane protein 1 (Mamestra brassicae (Cabbage moth)).